Reading from the N-terminus, the 485-residue chain is D-alanine--D-alanyl carrier protein ligase (485 aa).

144-145 contacts ATP; that stretch reads TS. A D-alanine-binding site is contributed by D189. 284 to 289 serves as a coordination point for ATP; the sequence is NTYGPT. V293 is a binding site for D-alanine. ATP-binding residues include D365 and K473. K473 contacts D-alanine.

The protein belongs to the ATP-dependent AMP-binding enzyme family. DltA subfamily.

It localises to the cytoplasm. It catalyses the reaction holo-[D-alanyl-carrier protein] + D-alanine + ATP = D-alanyl-[D-alanyl-carrier protein] + AMP + diphosphate. It functions in the pathway cell wall biogenesis; lipoteichoic acid biosynthesis. Functionally, catalyzes the first step in the D-alanylation of lipoteichoic acid (LTA), the activation of D-alanine and its transfer onto the D-alanyl carrier protein (Dcp) DltC. In an ATP-dependent two-step reaction, forms a high energy D-alanyl-AMP intermediate, followed by transfer of the D-alanyl residue as a thiol ester to the phosphopantheinyl prosthetic group of the Dcp. D-alanylation of LTA plays an important role in modulating the properties of the cell wall in Gram-positive bacteria, influencing the net charge of the cell wall. The sequence is that of D-alanine--D-alanyl carrier protein ligase from Staphylococcus aureus (strain USA300).